A 102-amino-acid chain; its full sequence is Small ribosomal subunit protein uS10 (102 aa).

The protein belongs to the universal ribosomal protein uS10 family. Part of the 30S ribosomal subunit.

In terms of biological role, involved in the binding of tRNA to the ribosomes. This chain is Small ribosomal subunit protein uS10, found in Clostridium kluyveri (strain NBRC 12016).